Reading from the N-terminus, the 267-residue chain is 5'-nucleotidase SurE (267 aa).

4 residues coordinate a divalent metal cation: aspartate 9, aspartate 10, serine 40, and asparagine 97.

The protein belongs to the SurE nucleotidase family. A divalent metal cation is required as a cofactor.

The protein resides in the cytoplasm. The enzyme catalyses a ribonucleoside 5'-phosphate + H2O = a ribonucleoside + phosphate. In terms of biological role, nucleotidase that shows phosphatase activity on nucleoside 5'-monophosphates. The sequence is that of 5'-nucleotidase SurE from Helicobacter pylori (strain ATCC 700392 / 26695) (Campylobacter pylori).